The following is a 941-amino-acid chain: Pre-mRNA-processing factor 6 (941 aa).

A disordered region spans residues 1–79; that stretch reads MNKKKKPFLG…DEDLNDTNYD (79 aa). The segment covering 39–65 has biased composition (basic and acidic residues); the sequence is DANDPVDDRHAPPGKRTVGDQMKKNQA. Residues 66-78 are compositionally biased toward acidic residues; it reads ADDDDEDLNDTNY. A Phosphoserine modification is found at serine 143. Phosphothreonine is present on residues threonine 180, threonine 266, and threonine 275. Serine 279 carries the post-translational modification Phosphoserine. HAT repeat units follow at residues 384 to 416, 418 to 444, 445 to 476, 554 to 586, 588 to 620, 622 to 654, 689 to 721, 723 to 755, and 855 to 887; these read TDIRAKKRVLRKALEHVPNSVRLWKAAVELEEP, DARIMLSRAVECCPTSVELWLALARLE, TYENARKVLNKARENIPTDRHIWITAAKLEEA, NALECARAIYAYALQVFPSKKSVWLRAAYFEKN, GTRESLEALLQRAVAHCPKAEVLWLMGAKSKWL, GDVPAARSILALAFQANPNSEEIWLAAVKLESE, GNISAAQELCEEALRHYEDFPKLWMMKGQIEEQ, ELMEKAREAYNQGLKKCPHSTPLWLLLSRLEEK, and RKITKAREWFHRTVKIDSDLGDAWAFFYKFELQ.

As to quaternary structure, identified in the spliceosome B complex. Identified in the spliceosome C complex. Associates with the U5 snRNP particle. Component of the U4/U6-U5 tri-snRNP complex composed of the U4, U6 and U5 snRNAs and at least PRPF3, PRPF4, PRPF6, PRPF8, PRPF31, SNRNP200, TXNL4A, SNRNP40, DDX23, CD2BP2, PPIH, SNU13, EFTUD2, SART1 and USP39, LSm proteins LSm2-8 and Sm proteins. Interacts with ARAF1. Interacts with AR and NR3C1, but not ESR1, independently of the presence of hormones. Interacts with USH1G. In terms of processing, phosphorylated by PRP4K during spliceosome assembly.

It is found in the nucleus. Its subcellular location is the nucleoplasm. The protein localises to the nucleus speckle. In terms of biological role, involved in pre-mRNA splicing as component of the U4/U6-U5 tri-snRNP complex, one of the building blocks of the spliceosome. Enhances dihydrotestosterone-induced transactivation activity of AR, as well as dexamethasone-induced transactivation activity of NR3C1, but does not affect estrogen-induced transactivation. In Mus musculus (Mouse), this protein is Pre-mRNA-processing factor 6 (Prpf6).